A 188-amino-acid chain; its full sequence is Adenylate kinase (188 aa).

An ATP-binding site is contributed by 12–17 (GSGKTT). The tract at residues 33–62 (STGDLLRAEVASGSELGKKIDSFISKGNLV) is NMP. AMP contacts are provided by residues threonine 34, arginine 39, 60 to 62 (NLV), 87 to 90 (GYPR), and glutamine 94. Residues 129 to 135 (GRARGAD) form an LID region. Residue arginine 130 participates in ATP binding. Residues arginine 132 and arginine 144 each contribute to the AMP site. Arginine 172 serves as a coordination point for ATP.

Belongs to the adenylate kinase family. In terms of assembly, monomer.

The protein localises to the cytoplasm. The catalysed reaction is AMP + ATP = 2 ADP. It participates in purine metabolism; AMP biosynthesis via salvage pathway; AMP from ADP: step 1/1. Catalyzes the reversible transfer of the terminal phosphate group between ATP and AMP. Plays an important role in cellular energy homeostasis and in adenine nucleotide metabolism. The protein is Adenylate kinase of Campylobacter curvus (strain 525.92).